Reading from the N-terminus, the 331-residue chain is Major outer membrane protein P.IB (331 aa).

An N-terminal signal peptide occupies residues 1–19 (MKKSLIALTLAALPVAAMA).

Belongs to the Gram-negative porin family. In terms of assembly, homotrimer.

It is found in the cell outer membrane. Its function is as follows. Serves as a slightly cation selective porin. This chain is Major outer membrane protein P.IB (porB), found in Neisseria meningitidis serogroup B.